A 249-amino-acid polypeptide reads, in one-letter code: Selenoprotein BthD (249 aa).

The disordered stretch occupies residues methionine 1 to leucine 22. The span at lysine 8 to glycine 19 shows a compositional bias: basic and acidic residues. Positions cysteine 34 to selenocysteine 37 form a cross-link, cysteinyl-selenocysteine (Cys-Sec); redox-active. A non-standard amino acid (selenocysteine) is located at residue selenocysteine 37. Residues glutamine 122–arginine 249 form a disordered region. Residue serine 147 is modified to Phosphoserine. The segment covering glutamate 175–lysine 198 has biased composition (basic and acidic residues). A compositionally biased stretch (basic residues) spans threonine 199–alanine 210.

As to expression, expressed in the developing salivary gland at late stages of embryogenesis. Also expressed in brain, neuroblast and wing disk.

The protein resides in the cytoplasm. It is found in the secreted. In terms of biological role, may be involved in a redox-related process. Required for survival and specifically for salivary gland morphogenesis. This Drosophila melanogaster (Fruit fly) protein is Selenoprotein BthD (BthD).